An 889-amino-acid chain; its full sequence is Inter-alpha-trypsin inhibitor heavy chain H3 (889 aa).

A signal peptide spans 1 to 21 (MRTMWWPCLVLALLSGLETSG). Residues 22-33 (FPRSPLQLLGKR) constitute a propeptide that is removed on maturation. Residues 29–158 (LLGKRSLPEG…KVTFELTYEE (130 aa)) enclose the VIT domain. N-linked (GlcNAc...) asparagine glycosylation occurs at N91. Residues 284-467 (NIVFVIDVSG…LQLQGFYEEV (184 aa)) form the VWFA domain. N-linked (GlcNAc...) asparagine glycosylation occurs at N580. An Aspartate 1-(chondroitin 4-sulfate)-ester modification is found at D649. A propeptide spanning residues 650-889 (PHFIIQIPGK…HTDYIVPSLF (240 aa)) is cleaved from the precursor.

The protein belongs to the ITIH family. In terms of assembly, I-alpha-I plasma protease inhibitors are assembled from one or two heavy chains (HC) and one light chain, bikunin. Pre-alpha-inhibitor (P-alpha-I) is composed of ITIH3/HC3 and bikunin. Post-translationally, heavy chains are linked to bikunin via chondroitin 4-sulfate esterified to the alpha-carboxyl of the C-terminal aspartate after propeptide cleavage. In terms of tissue distribution, expressed in both liver and brain.

It localises to the secreted. Functionally, may act as a carrier of hyaluronan in serum or as a binding protein between hyaluronan and other matrix protein, including those on cell surfaces in tissues to regulate the localization, synthesis and degradation of hyaluronan which are essential to cells undergoing biological processes. This Mus musculus (Mouse) protein is Inter-alpha-trypsin inhibitor heavy chain H3 (Itih3).